The chain runs to 130 residues: Small ribosomal subunit protein bS6 (130 aa).

The interval 99-130 (ASPMVKAKDERRERHDFASEANDDSEAGDSEE) is disordered. Positions 104-116 (KAKDERRERHDFA) are enriched in basic and acidic residues. A compositionally biased stretch (acidic residues) spans 119 to 130 (ANDDSEAGDSEE).

This sequence belongs to the bacterial ribosomal protein bS6 family.

In terms of biological role, binds together with bS18 to 16S ribosomal RNA. The protein is Small ribosomal subunit protein bS6 of Yersinia enterocolitica serotype O:8 / biotype 1B (strain NCTC 13174 / 8081).